The following is a 1466-amino-acid chain: Retrovirus-related Pol polyprotein from transposon RE1 (1466 aa).

The disordered stretch occupies residues 227-270 (SHRNTTTTNNNNNGNRNNRYDNRNNNNNSKPWQQSSTNFHPNNN). Residues 229–254 (RNTTTTNNNNNGNRNNRYDNRNNNNN) show a composition bias toward low complexity. Residues 255 to 270 (SKPWQQSSTNFHPNNN) are compositionally biased toward polar residues. A CCHC-type zinc finger spans residues 278-294 (KCQICGVQGHSAKRCSQ). Asp334 functions as the For protease activity in the catalytic mechanism. An Integrase catalytic domain is found at 519–682 (NSTRPLEYIY…SPFQKLFGTS (164 aa)). 2 residues coordinate Mg(2+): Asp530 and Asp592. The interval 772 to 927 (WSPHTTLPTR…NNNQAPLNTH (156 aa)) is disordered. Low complexity-rich tracts occupy residues 796–827 (AATP…SFPS) and 836–898 (QNGP…SSTS). Residues 899 to 912 (PTPPSILIHPPPPL) are compositionally biased toward pro residues. A compositionally biased stretch (polar residues) spans 915-927 (IVNNNNQAPLNTH). The Reverse transcriptase Ty1/copia-type domain maps to 982–1225 (NHTWDLVPPP…ITAKPVTTPM (244 aa)).

It catalyses the reaction DNA(n) + a 2'-deoxyribonucleoside 5'-triphosphate = DNA(n+1) + diphosphate. The polypeptide is Retrovirus-related Pol polyprotein from transposon RE1 (RE1) (Arabidopsis thaliana (Mouse-ear cress)).